The chain runs to 354 residues: Large ribosomal subunit protein uL10 (354 aa).

Acidic residues-rich tracts occupy residues 286-296 (DEEALPEELQD) and 307-345 (AEADDEDDTGNVEQTDESDADDADDADDADDADEEDGDG). Residues 286-354 (DEEALPEELQ…GGDALGDMFG (69 aa)) form a disordered region.

The protein belongs to the universal ribosomal protein uL10 family. In terms of assembly, part of the 50S ribosomal subunit. Forms part of the ribosomal stalk which helps the ribosome interact with GTP-bound translation factors. Forms a heptameric L10(L12)2(L12)2(L12)2 complex, where L10 forms an elongated spine to which the L12 dimers bind in a sequential fashion.

In terms of biological role, forms part of the ribosomal stalk, playing a central role in the interaction of the ribosome with GTP-bound translation factors. This chain is Large ribosomal subunit protein uL10, found in Natronomonas pharaonis (strain ATCC 35678 / DSM 2160 / CIP 103997 / JCM 8858 / NBRC 14720 / NCIMB 2260 / Gabara) (Halobacterium pharaonis).